The following is a 167-amino-acid chain: MATAGMLLKLNSQMNREFYASNLYLHLSNWCSEQSLNGTATFLRAQAQSNVTQMMRMFNFMKSVGATPIVKAIDVPGEKLNSLEELFQKTMEEYEQRSSTLAQLADEAKELNDDSTVNFLRDLEKEQQHDGLLLQTILDEVRSAKLAGMCPVQTDQHVLNVVSHQLH.

One can recognise a Ferritin-like diiron domain in the interval 1–145 (MATAGMLLKL…TILDEVRSAK (145 aa)).

It belongs to the ferritin family. Prokaryotic subfamily.

The protein resides in the cytoplasm. This is Bacterial non-heme ferritin-like protein (ftnB) from Escherichia coli O157:H7.